The chain runs to 396 residues: Elongation factor Tu (396 aa).

One can recognise a tr-type G domain in the interval 10 to 205 (KTHANIGTIG…AVDEYIPTPE (196 aa)). Residues 19-26 (GHVDHGKT) form a G1 region. 19–26 (GHVDHGKT) contacts GTP. Thr26 contributes to the Mg(2+) binding site. The tract at residues 61–65 (GITIS) is G2. Residues 82-85 (DCPG) are G3. GTP-binding positions include 82–86 (DCPGH) and 137–140 (NKCD). A G4 region spans residues 137-140 (NKCD). The interval 175-177 (SAL) is G5.

It belongs to the TRAFAC class translation factor GTPase superfamily. Classic translation factor GTPase family. EF-Tu/EF-1A subfamily. In terms of assembly, monomer.

The protein localises to the cytoplasm. It carries out the reaction GTP + H2O = GDP + phosphate + H(+). In terms of biological role, GTP hydrolase that promotes the GTP-dependent binding of aminoacyl-tRNA to the A-site of ribosomes during protein biosynthesis. The chain is Elongation factor Tu from Shouchella clausii (strain KSM-K16) (Alkalihalobacillus clausii).